Consider the following 741-residue polypeptide: Zinc finger and BTB domain-containing protein 20 (741 aa).

Basic and acidic residues predominate over residues 1–17; sequence MLERKKPKTAENQKASE. Residues 1–32 form a disordered region; sequence MLERKKPKTAENQKASEENEITQPGGSSAKPG. In terms of domain architecture, BTB spans 104–167; sequence CDVTVRIHGS…MYSGVLRVSQ (64 aa). The segment at 203 to 235 is disordered; it reads GIQDSGQDTPRGTPESGTSGQSSDTESGYLQSH. A compositionally biased stretch (polar residues) spans 206–235; sequence DSGQDTPRGTPESGTSGQSSDTESGYLQSH. Residue threonine 211 is modified to Phosphothreonine. Lysine 330 is covalently cross-linked (Glycyl lysine isopeptide (Lys-Gly) (interchain with G-Cter in SUMO1); alternate). Lysine 330 participates in a covalent cross-link: Glycyl lysine isopeptide (Lys-Gly) (interchain with G-Cter in SUMO2); alternate. Residues 350–440 form a disordered region; sequence RNESEECTED…SSPERSNEVE (91 aa). Phosphoserine is present on serine 353. A compositionally biased stretch (acidic residues) spans 354–367; that stretch reads EECTEDTDQAEGTE. Threonine 357 carries the post-translational modification Phosphothreonine. A Glycyl lysine isopeptide (Lys-Gly) (interchain with G-Cter in SUMO2) cross-link involves residue lysine 371. The span at 404-423 shows a compositional bias: low complexity; that stretch reads AEPTQPEQAAEAPAEGGPQT. Residues 424 to 434 are compositionally biased toward polar residues; sequence NQLETGASSPE. C2H2-type zinc fingers lie at residues 578–600, 606–628, 634–656, and 662–684; these read YECT…MFVH, HQCS…MVTH, YQCS…MRLH, and YECY…VALH. A phosphothreonine mark is found at threonine 690 and threonine 695. Residues 715–737 form a C2H2-type 5 zinc finger; the sequence is YVCSVCPAKFDQIEQFNDHMRMH. Lysine 723 is covalently cross-linked (Glycyl lysine isopeptide (Lys-Gly) (interchain with G-Cter in SUMO2)).

Can homodimerize. Binds to DNA. Sumoylated with SUMO1. Expressed in spleen, lymph node, thymus, peripheral blood leukocytes, and fetal liver.

The protein localises to the nucleus. Its function is as follows. May be a transcription factor that may be involved in hematopoiesis, oncogenesis, and immune responses. Plays a role in postnatal myogenesis, may be involved in the regulation of satellite cells self-renewal. This chain is Zinc finger and BTB domain-containing protein 20 (ZBTB20), found in Homo sapiens (Human).